A 316-amino-acid chain; its full sequence is Probable cobalamin biosynthesis protein CobD (316 aa).

5 helical membrane passes run 1–21 (MITE…DIVL), 50–70 (ISGM…GFAL), 89–109 (ILAL…KSLI), 165–185 (PLFY…ALAF), and 294–314 (ISLI…LLIL).

It belongs to the CobD/CbiB family.

The protein localises to the cell membrane. It functions in the pathway cofactor biosynthesis; adenosylcobalamin biosynthesis. Converts cobyric acid to cobinamide by the addition of aminopropanol on the F carboxylic group. The polypeptide is Probable cobalamin biosynthesis protein CobD (Methanothrix thermoacetophila (strain DSM 6194 / JCM 14653 / NBRC 101360 / PT) (Methanosaeta thermophila)).